A 1044-amino-acid polypeptide reads, in one-letter code: Phosphatidylinositol 4,5-bisphosphate 3-kinase catalytic subunit delta isoform (1044 aa).

Residues 16 to 105 (ENQSVVVDFL…LPVLRLVARE (90 aa)) enclose the PI3K-ABD domain. Positions 187–278 (NRALLVNVKF…GLTPHLTMVH (92 aa)) constitute a PI3K-RBD domain. The tract at residues 287-312 (DEQSNPAPQVQKPRAKPPPIPAKKPS) is disordered. Positions 319–476 (LEQPFRIELI…SAAALLICLP (158 aa)) constitute a C2 PI3K-type domain. One can recognise a PIK helical domain in the interval 497-674 (HSECVHVTEE…GLILEAYCRG (178 aa)). Tyrosine 524 is modified (phosphotyrosine). Residues 745–1027 (CVEQCTFMDS…KFNEALRESW (283 aa)) form the PI3K/PI4K catalytic domain. The G-loop stretch occupies residues 751–757 (FMDSKMK). A catalytic loop region spans residues 890–898 (GIGDRHSDN). An activation loop region spans residues 909-935 (HIDFGHFLGNFKTKFGINRERVPFILT). Serine 1039 carries the post-translational modification Phosphoserine; by autocatalysis.

The protein belongs to the PI3/PI4-kinase family. As to quaternary structure, heterodimer of a catalytic subunit PIK3CD and a p85 regulatory subunit (PIK3R1, PIK3R2 or PIK3R3). Interacts with ERAS. Interacts with HRAS. Post-translationally, autophosphorylation on Ser-1039 results in the almost complete inactivation of the lipid kinase activity. In terms of tissue distribution, in humans, the highest levels of expression are seen in peripheral blood mononuclear cells, spleen, and thymus, and low levels of expression in testes, uterus, colon, and small intestine but not in other tissues examined including prostate, heart, brain, and liver. Isoform 2 is expressed in normal thymus, lung and spleen tissues, and is detected at low levels in normal lysates from colon and ovarian biopsies, at elevated levels in lysates from colorectal tumors and is abundantly expressed in some ovarian tumors (at protein level). Both isoform 1 and isoform 2 are widely expressed. Isoform 1 is expressed predominantly in leukocytes.

The protein resides in the cytoplasm. The enzyme catalyses a 1,2-diacyl-sn-glycero-3-phospho-(1D-myo-inositol-4,5-bisphosphate) + ATP = a 1,2-diacyl-sn-glycero-3-phospho-(1D-myo-inositol-3,4,5-trisphosphate) + ADP + H(+). It catalyses the reaction a 1,2-diacyl-sn-glycero-3-phospho-(1D-myo-inositol) + ATP = a 1,2-diacyl-sn-glycero-3-phospho-(1D-myo-inositol-3-phosphate) + ADP + H(+). It carries out the reaction 1-octadecanoyl-2-(5Z,8Z,11Z,14Z)-eicosatetraenoyl-sn-glycero-3-phospho-1D-myo-inositol 4,5-bisphosphate + ATP = 1-octadecanoyl-2-(5Z,8Z,11Z,14Z-eicosatetraenoyl)-sn-glycero-3-phospho-(1D-myo-inositol 3,4,5-triphosphate) + ADP + H(+). The protein operates within phospholipid metabolism; phosphatidylinositol phosphate biosynthesis. Its activity is regulated as follows. Activated by growth factors and cytokine receptors through a tyrosine-kinase-dependent mechanism. Activated by RAS. IC87114 inhibits lipid kinase activity and is selective in cells at doses up to 5-10 uM. IC87114 blocks T-cell receptor signaling in naive and memory T-cells and reduces cytokine production by memory T-cells. Functionally, phosphoinositide-3-kinase (PI3K) phosphorylates phosphatidylinositol (PI) and its phosphorylated derivatives at position 3 of the inositol ring to produce 3-phosphoinositides. Uses ATP and PtdIns(4,5)P2 (phosphatidylinositol 4,5-bisphosphate) to generate phosphatidylinositol 3,4,5-trisphosphate (PIP3). PIP3 plays a key role by recruiting PH domain-containing proteins to the membrane, including AKT1 and PDPK1, activating signaling cascades involved in cell growth, survival, proliferation, motility and morphology. Mediates immune responses. Plays a role in B-cell development, proliferation, migration, and function. Required for B-cell receptor (BCR) signaling. Mediates B-cell proliferation response to anti-IgM, anti-CD40 and IL4 stimulation. Promotes cytokine production in response to TLR4 and TLR9. Required for antibody class switch mediated by TLR9. Involved in the antigen presentation function of B-cells. Involved in B-cell chemotaxis in response to CXCL13 and sphingosine 1-phosphate (S1P). Required for proliferation, signaling and cytokine production of naive, effector and memory T-cells. Required for T-cell receptor (TCR) signaling. Mediates TCR signaling events at the immune synapse. Activation by TCR leads to antigen-dependent memory T-cell migration and retention to antigenic tissues. Together with PIK3CG participates in T-cell development. Contributes to T-helper cell expansion and differentiation. Required for T-cell migration mediated by homing receptors SELL/CD62L, CCR7 and S1PR1 and antigen dependent recruitment of T-cells. Together with PIK3CG is involved in natural killer (NK) cell development and migration towards the sites of inflammation. Participates in NK cell receptor activation. Plays a role in NK cell maturation and cytokine production. Together with PIK3CG is involved in neutrophil chemotaxis and extravasation. Together with PIK3CG participates in neutrophil respiratory burst. Plays important roles in mast-cell development and mast cell mediated allergic response. Involved in stem cell factor (SCF)-mediated proliferation, adhesion and migration. Required for allergen-IgE-induced degranulation and cytokine release. The lipid kinase activity is required for its biological function. Isoform 2 may be involved in stabilizing total RAS levels, resulting in increased ERK phosphorylation and increased PI3K activity. This is Phosphatidylinositol 4,5-bisphosphate 3-kinase catalytic subunit delta isoform (PIK3CD) from Homo sapiens (Human).